A 484-amino-acid polypeptide reads, in one-letter code: 1,4-beta-D-glucan cellobiohydrolase CEL6A (484 aa).

A signal peptide spans Met1–Ala17. One can recognise a CBM1 domain in the interval Asn26 to Leu62. 2 disulfides stabilise this stretch: Cys34–Cys51 and Cys45–Cys61. The interval Thr68 to Asn98 is disordered. Substrate is bound by residues Trp171 and Asp173. A glycan (N-linked (GlcNAc...) asparagine) is linked at Asn175. A substrate binding loop 1 region spans residues Tyr208–Gly230. Residue Asp260 is the Proton donor of the active site. Residues His305, Trp308, Asn344, Trp405, Lys433, and Glu437 each coordinate substrate. Residues Trp431–Phe469 form a substrate binding loop 2 region. Residue Asp439 is the Proton acceptor of the active site.

It belongs to the glycosyl hydrolase 6 (cellulase B) family. As to quaternary structure, monomer. Both N- and O-glycosylated.

The protein resides in the secreted. The catalysed reaction is Hydrolysis of (1-&gt;4)-beta-D-glucosidic linkages in cellulose and cellotetraose, releasing cellobiose from the non-reducing ends of the chains.. Its function is as follows. Exoglucanase that plays an important function in biomass degradation by catalyzing the hydrolysis of the non-reducing end beta-1,4-glucosidic linkages in cellulose and cellotetraose to release cellobiose. Hydrolyzes crystalline and amorphous cellulose but is inactive on hydroxyethyl cellulose, mannan, galactomannan, xyloglucan, arabinoxylan, arabinan, xylan, and pectin. This is 1,4-beta-D-glucan cellobiohydrolase CEL6A from Podospora anserina (strain S / ATCC MYA-4624 / DSM 980 / FGSC 10383) (Pleurage anserina).